The sequence spans 154 residues: Large ribosomal subunit protein uL13 (154 aa).

The protein belongs to the universal ribosomal protein uL13 family. In terms of assembly, part of the 50S ribosomal subunit.

Functionally, this protein is one of the early assembly proteins of the 50S ribosomal subunit, although it is not seen to bind rRNA by itself. It is important during the early stages of 50S assembly. The protein is Large ribosomal subunit protein uL13 of Brucella suis (strain ATCC 23445 / NCTC 10510).